Consider the following 491-residue polypeptide: 2-aminomuconic 6-semialdehyde dehydrogenase (491 aa).

Catalysis depends on residues Glu-252 and Cys-286.

The protein belongs to the aldehyde dehydrogenase family. As to quaternary structure, homotrimer.

It carries out the reaction 2-aminomuconate 6-semialdehyde + NAD(+) + H2O = (2Z,4E)-2-aminomuconate + NADH + 2 H(+). Its activity is regulated as follows. Strongly inhibited by Ag(+) and Hg(+), and comnpletely inhibited by p-chloromercuribenzoic acid. In terms of biological role, involved in the modified meta-cleavage pathway for 2-aminophenol catabolism. The enzyme is also active toward 2-hydroxymuconic 6-semialdehyde, acetaldehyde, propionaldehyde, and butyraldehyde. This Pseudomonas sp protein is 2-aminomuconic 6-semialdehyde dehydrogenase (amnC).